The following is a 299-amino-acid chain: Ribosomal RNA small subunit methyltransferase H (299 aa).

S-adenosyl-L-methionine-binding positions include 36–38, aspartate 55, aspartate 103, and glutamine 110; that span reads GGH. Composition is skewed to basic and acidic residues over residues 268-282 and 289-299; these read KPVR…ENPR and RAAERIEKGGD. A disordered region spans residues 268 to 299; sequence KPVRPSEEEIRENPRARSGRLRAAERIEKGGD.

This sequence belongs to the methyltransferase superfamily. RsmH family.

It localises to the cytoplasm. It catalyses the reaction cytidine(1402) in 16S rRNA + S-adenosyl-L-methionine = N(4)-methylcytidine(1402) in 16S rRNA + S-adenosyl-L-homocysteine + H(+). Its function is as follows. Specifically methylates the N4 position of cytidine in position 1402 (C1402) of 16S rRNA. The protein is Ribosomal RNA small subunit methyltransferase H of Thermotoga petrophila (strain ATCC BAA-488 / DSM 13995 / JCM 10881 / RKU-1).